The chain runs to 147 residues: Nucleoside diphosphate kinase (147 aa).

Residues Lys-9, Phe-57, Arg-85, Thr-91, Arg-102, and Asn-112 each contribute to the ATP site. Catalysis depends on His-115, which acts as the Pros-phosphohistidine intermediate.

This sequence belongs to the NDK family. In terms of assembly, homotetramer. Mg(2+) serves as cofactor.

Its subcellular location is the cytoplasm. The enzyme catalyses a 2'-deoxyribonucleoside 5'-diphosphate + ATP = a 2'-deoxyribonucleoside 5'-triphosphate + ADP. It carries out the reaction a ribonucleoside 5'-diphosphate + ATP = a ribonucleoside 5'-triphosphate + ADP. Its function is as follows. Major role in the synthesis of nucleoside triphosphates other than ATP. The ATP gamma phosphate is transferred to the NDP beta phosphate via a ping-pong mechanism, using a phosphorylated active-site intermediate. This chain is Nucleoside diphosphate kinase, found in Thermosipho melanesiensis (strain DSM 12029 / CIP 104789 / BI429).